Consider the following 160-residue polypeptide: MGVAKKPDLSDPVSRAKLAKGMGHNYYGEPAWPNDLLYIPPVVIPGTIACTVGLAVLEPSMIGEPANPFATPLEILPEWYFSPVFQILRTVPNKLLGVLLMAAVPAGLLVVPFPENVNKFQNPFRRPVATTVFSAGTAVAPWLGIGAALPIDKSLTLGLF.

The next 3 helical transmembrane spans lie at 36 to 56 (LLYI…GLAV), 95 to 115 (LLGV…PFPE), and 131 to 151 (TVFS…ALPI).

Belongs to the cytochrome b family. PetD subfamily. As to quaternary structure, the 4 large subunits of the cytochrome b6-f complex are cytochrome b6, subunit IV (17 kDa polypeptide, petD), cytochrome f and the Rieske protein, while the 4 small subunits are petG, petL, petM and petN. The complex functions as a dimer.

It localises to the plastid. The protein resides in the chloroplast thylakoid membrane. Component of the cytochrome b6-f complex, which mediates electron transfer between photosystem II (PSII) and photosystem I (PSI), cyclic electron flow around PSI, and state transitions. The protein is Cytochrome b6-f complex subunit 4 of Huperzia lucidula (Shining clubmoss).